The following is a 129-amino-acid chain: Small ribosomal subunit protein uS11 (129 aa).

This sequence belongs to the universal ribosomal protein uS11 family. Part of the 30S ribosomal subunit. Interacts with proteins S7 and S18. Binds to IF-3.

Located on the platform of the 30S subunit, it bridges several disparate RNA helices of the 16S rRNA. Forms part of the Shine-Dalgarno cleft in the 70S ribosome. The polypeptide is Small ribosomal subunit protein uS11 (Geobacillus sp. (strain WCH70)).